The following is a 157-amino-acid chain: Endoribonuclease YbeY (157 aa).

Zn(2+) contacts are provided by H116, H120, and H126.

This sequence belongs to the endoribonuclease YbeY family. Requires Zn(2+) as cofactor.

Its subcellular location is the cytoplasm. Single strand-specific metallo-endoribonuclease involved in late-stage 70S ribosome quality control and in maturation of the 3' terminus of the 16S rRNA. This is Endoribonuclease YbeY from Arthrobacter sp. (strain FB24).